The following is a 113-amino-acid chain: Large ribosomal subunit protein uL22 (113 aa).

Belongs to the universal ribosomal protein uL22 family. As to quaternary structure, part of the 50S ribosomal subunit.

In terms of biological role, this protein binds specifically to 23S rRNA; its binding is stimulated by other ribosomal proteins, e.g. L4, L17, and L20. It is important during the early stages of 50S assembly. It makes multiple contacts with different domains of the 23S rRNA in the assembled 50S subunit and ribosome. Functionally, the globular domain of the protein is located near the polypeptide exit tunnel on the outside of the subunit, while an extended beta-hairpin is found that lines the wall of the exit tunnel in the center of the 70S ribosome. The protein is Large ribosomal subunit protein uL22 of Trichlorobacter lovleyi (strain ATCC BAA-1151 / DSM 17278 / SZ) (Geobacter lovleyi).